A 459-amino-acid chain; its full sequence is Bifunctional protein GlmU (459 aa).

A pyrophosphorylase region spans residues 1 to 229 (MSNYAIILAA…FDESLGVNDR (229 aa)). UDP-N-acetyl-alpha-D-glucosamine-binding positions include 8–11 (LAAG), K22, Q72, and 77–78 (GT). D102 serves as a coordination point for Mg(2+). Residues G139, E154, N169, and N227 each contribute to the UDP-N-acetyl-alpha-D-glucosamine site. N227 contributes to the Mg(2+) binding site. The tract at residues 230–250 (VALATAEKVMRHRIARQHMVN) is linker. An N-acetyltransferase region spans residues 251–459 (GVTVVNPDSA…NKKPHHPSQK (209 aa)). 2 residues coordinate UDP-N-acetyl-alpha-D-glucosamine: R332 and K350. H362 functions as the Proton acceptor in the catalytic mechanism. Residues Y365 and N376 each contribute to the UDP-N-acetyl-alpha-D-glucosamine site. Acetyl-CoA is bound by residues A379, 385–386 (NY), S404, A422, and R439.

It in the N-terminal section; belongs to the N-acetylglucosamine-1-phosphate uridyltransferase family. The protein in the C-terminal section; belongs to the transferase hexapeptide repeat family. As to quaternary structure, homotrimer. The cofactor is Mg(2+).

The protein resides in the cytoplasm. It carries out the reaction alpha-D-glucosamine 1-phosphate + acetyl-CoA = N-acetyl-alpha-D-glucosamine 1-phosphate + CoA + H(+). The catalysed reaction is N-acetyl-alpha-D-glucosamine 1-phosphate + UTP + H(+) = UDP-N-acetyl-alpha-D-glucosamine + diphosphate. It functions in the pathway nucleotide-sugar biosynthesis; UDP-N-acetyl-alpha-D-glucosamine biosynthesis; N-acetyl-alpha-D-glucosamine 1-phosphate from alpha-D-glucosamine 6-phosphate (route II): step 2/2. The protein operates within nucleotide-sugar biosynthesis; UDP-N-acetyl-alpha-D-glucosamine biosynthesis; UDP-N-acetyl-alpha-D-glucosamine from N-acetyl-alpha-D-glucosamine 1-phosphate: step 1/1. Its pathway is bacterial outer membrane biogenesis; LPS lipid A biosynthesis. In terms of biological role, catalyzes the last two sequential reactions in the de novo biosynthetic pathway for UDP-N-acetylglucosamine (UDP-GlcNAc). The C-terminal domain catalyzes the transfer of acetyl group from acetyl coenzyme A to glucosamine-1-phosphate (GlcN-1-P) to produce N-acetylglucosamine-1-phosphate (GlcNAc-1-P), which is converted into UDP-GlcNAc by the transfer of uridine 5-monophosphate (from uridine 5-triphosphate), a reaction catalyzed by the N-terminal domain. This chain is Bifunctional protein GlmU, found in Streptococcus agalactiae serotype V (strain ATCC BAA-611 / 2603 V/R).